The primary structure comprises 509 residues: ATP synthase subunit alpha (509 aa).

An ATP-binding site is contributed by 169-176 (GDRQTGKT).

It belongs to the ATPase alpha/beta chains family. In terms of assembly, F-type ATPases have 2 components, CF(1) - the catalytic core - and CF(0) - the membrane proton channel. CF(1) has five subunits: alpha(3), beta(3), gamma(1), delta(1), epsilon(1). CF(0) has three main subunits: a(1), b(2) and c(9-12). The alpha and beta chains form an alternating ring which encloses part of the gamma chain. CF(1) is attached to CF(0) by a central stalk formed by the gamma and epsilon chains, while a peripheral stalk is formed by the delta and b chains.

It is found in the cell inner membrane. The enzyme catalyses ATP + H2O + 4 H(+)(in) = ADP + phosphate + 5 H(+)(out). Its function is as follows. Produces ATP from ADP in the presence of a proton gradient across the membrane. The alpha chain is a regulatory subunit. This is ATP synthase subunit alpha from Rhizobium leguminosarum bv. trifolii (strain WSM2304).